Here is a 276-residue protein sequence, read N- to C-terminus: Ribosomal RNA small subunit methyltransferase A (276 aa).

Positions 15, 17, 42, 64, 89, and 108 each coordinate S-adenosyl-L-methionine.

Belongs to the class I-like SAM-binding methyltransferase superfamily. rRNA adenine N(6)-methyltransferase family. RsmA subfamily.

It is found in the cytoplasm. The enzyme catalyses adenosine(1518)/adenosine(1519) in 16S rRNA + 4 S-adenosyl-L-methionine = N(6)-dimethyladenosine(1518)/N(6)-dimethyladenosine(1519) in 16S rRNA + 4 S-adenosyl-L-homocysteine + 4 H(+). Its function is as follows. Specifically dimethylates two adjacent adenosines (A1518 and A1519) in the loop of a conserved hairpin near the 3'-end of 16S rRNA in the 30S particle. May play a critical role in biogenesis of 30S subunits. This chain is Ribosomal RNA small subunit methyltransferase A, found in Prochlorococcus marinus (strain MIT 9312).